We begin with the raw amino-acid sequence, 378 residues long: Putative glutamate--cysteine ligase 2 (378 aa).

It belongs to the glutamate--cysteine ligase type 2 family. YbdK subfamily.

The enzyme catalyses L-cysteine + L-glutamate + ATP = gamma-L-glutamyl-L-cysteine + ADP + phosphate + H(+). ATP-dependent carboxylate-amine ligase which exhibits weak glutamate--cysteine ligase activity. In Jannaschia sp. (strain CCS1), this protein is Putative glutamate--cysteine ligase 2.